The primary structure comprises 271 residues: Dermonecrotic toxin LhSicTox-alphaIA2aiv (271 aa).

His-3 is a catalytic residue. Residues Glu-23 and Asp-25 each coordinate Mg(2+). The active-site Nucleophile is His-39. 2 cysteine pairs are disulfide-bonded: Cys-43/Cys-49 and Cys-45/Cys-188. Asp-83 provides a ligand contact to Mg(2+).

Belongs to the arthropod phospholipase D family. Class II subfamily. It depends on Mg(2+) as a cofactor. Expressed by the venom gland.

It localises to the secreted. The enzyme catalyses an N-(acyl)-sphingosylphosphocholine = an N-(acyl)-sphingosyl-1,3-cyclic phosphate + choline. It carries out the reaction an N-(acyl)-sphingosylphosphoethanolamine = an N-(acyl)-sphingosyl-1,3-cyclic phosphate + ethanolamine. It catalyses the reaction a 1-acyl-sn-glycero-3-phosphocholine = a 1-acyl-sn-glycero-2,3-cyclic phosphate + choline. The catalysed reaction is a 1-acyl-sn-glycero-3-phosphoethanolamine = a 1-acyl-sn-glycero-2,3-cyclic phosphate + ethanolamine. Its function is as follows. Dermonecrotic toxins cleave the phosphodiester linkage between the phosphate and headgroup of certain phospholipids (sphingolipid and lysolipid substrates), forming an alcohol (often choline) and a cyclic phosphate. This toxin acts on sphingomyelin (SM). It may also act on ceramide phosphoethanolamine (CPE), lysophosphatidylcholine (LPC) and lysophosphatidylethanolamine (LPE), but not on lysophosphatidylserine (LPS), and lysophosphatidylglycerol (LPG). It acts by transphosphatidylation, releasing exclusively cyclic phosphate products as second products. Induces dermonecrosis, hemolysis, increased vascular permeability, edema, inflammatory response, and platelet aggregation. This chain is Dermonecrotic toxin LhSicTox-alphaIA2aiv, found in Loxosceles hirsuta (Recluse spider).